The following is a 148-amino-acid chain: EITTFAALTERFNLPNGNYQRPKLLYCSNGGHFLRILPDGKVDGTRDRSDPYIQLQFYAESVGEVYIKSLETGQYLAMDSDGRLYASQSPSEECLFLERLEENHYNTYKSKMHADKDWFVGIKKNGKTKLGSRTHFGQKAILFLPLPV.

Residues 1 to 11 (EITTFAALTER) constitute a propeptide that is removed on maturation. Asn29 provides a ligand contact to heparin. Residues 123 to 139 (KKNGKTKLGSRTHFGQK) are heparin-binding.

Belongs to the heparin-binding growth factors family.

It is found in the secreted. It localises to the cytoplasm. The protein resides in the cell cortex. The protein localises to the cytosol. Its subcellular location is the nucleus. In terms of biological role, plays an important role in the regulation of cell survival, cell division, angiogenesis, cell differentiation and cell migration. Functions as a potent mitogen in vitro. Acts as a ligand for FGFR1 and integrins. Binds to FGFR1 in the presence of heparin leading to FGFR1 dimerization and activation via sequential autophosphorylation on tyrosine residues which act as docking sites for interacting proteins, leading to the activation of several signaling cascades. Binds to integrins. Its binding to integrins and subsequent ternary complex formation with integrins and FGFR1 are essential for FGF1 signaling. The polypeptide is Fibroblast growth factor 1 (fgf1) (Cynops pyrrhogaster (Japanese fire-bellied newt)).